The chain runs to 598 residues: Elongation factor 4 (598 aa).

A tr-type G domain is found at 4–186 (DHIRNFSIIA…AIVKRVPPPK (183 aa)). GTP contacts are provided by residues 16-21 (DHGKST) and 133-136 (NKID).

It belongs to the TRAFAC class translation factor GTPase superfamily. Classic translation factor GTPase family. LepA subfamily.

Its subcellular location is the cell inner membrane. It catalyses the reaction GTP + H2O = GDP + phosphate + H(+). Its function is as follows. Required for accurate and efficient protein synthesis under certain stress conditions. May act as a fidelity factor of the translation reaction, by catalyzing a one-codon backward translocation of tRNAs on improperly translocated ribosomes. Back-translocation proceeds from a post-translocation (POST) complex to a pre-translocation (PRE) complex, thus giving elongation factor G a second chance to translocate the tRNAs correctly. Binds to ribosomes in a GTP-dependent manner. In Magnetococcus marinus (strain ATCC BAA-1437 / JCM 17883 / MC-1), this protein is Elongation factor 4.